A 126-amino-acid polypeptide reads, in one-letter code: Protein ApaG (126 aa).

Residues 2–126 (SALDDSIRVE…FRLALPGLLH (125 aa)) enclose the ApaG domain.

This Shewanella sp. (strain MR-7) protein is Protein ApaG.